We begin with the raw amino-acid sequence, 115 residues long: Evasin P1181 (115 aa).

The first 25 residues, 1-25 (MALNWSFRVIFVSAMWCALLKFATL), serve as a signal peptide directing secretion. Cystine bridges form between cysteine 38–cysteine 58, cysteine 54–cysteine 94, cysteine 70–cysteine 99, and cysteine 89–cysteine 108. N-linked (GlcNAc...) asparagine glycans are attached at residues asparagine 45, asparagine 72, and asparagine 103.

Its subcellular location is the secreted. Salivary chemokine-binding protein which binds to host chemokines CCL3 and CCL4. This is Evasin P1181 from Amblyomma maculatum (Gulf Coast tick).